Here is a 371-residue protein sequence, read N- to C-terminus: Dual-specificity RNA methyltransferase RlmN (371 aa).

The active-site Proton acceptor is Glu92. A Radical SAM core domain is found at 98 to 337 (EADRATLCVS…VTVRKTRGDD (240 aa)). Residues Cys105 and Cys342 are joined by a disulfide bond. Cys112, Cys116, and Cys119 together coordinate [4Fe-4S] cluster. S-adenosyl-L-methionine is bound by residues 166–167 (GE), Ser198, 220–222 (SLH), and Asn299. The S-methylcysteine intermediate role is filled by Cys342.

It belongs to the radical SAM superfamily. RlmN family. It depends on [4Fe-4S] cluster as a cofactor.

It is found in the cytoplasm. The enzyme catalyses adenosine(2503) in 23S rRNA + 2 reduced [2Fe-2S]-[ferredoxin] + 2 S-adenosyl-L-methionine = 2-methyladenosine(2503) in 23S rRNA + 5'-deoxyadenosine + L-methionine + 2 oxidized [2Fe-2S]-[ferredoxin] + S-adenosyl-L-homocysteine. It carries out the reaction adenosine(37) in tRNA + 2 reduced [2Fe-2S]-[ferredoxin] + 2 S-adenosyl-L-methionine = 2-methyladenosine(37) in tRNA + 5'-deoxyadenosine + L-methionine + 2 oxidized [2Fe-2S]-[ferredoxin] + S-adenosyl-L-homocysteine. Specifically methylates position 2 of adenine 2503 in 23S rRNA and position 2 of adenine 37 in tRNAs. m2A2503 modification seems to play a crucial role in the proofreading step occurring at the peptidyl transferase center and thus would serve to optimize ribosomal fidelity. The protein is Dual-specificity RNA methyltransferase RlmN of Actinobacillus succinogenes (strain ATCC 55618 / DSM 22257 / CCUG 43843 / 130Z).